Reading from the N-terminus, the 96-residue chain is MIQKLTSEQRATQLAGLHGWQAVADRDAIQRQFKFADFNEAFGFMTRVAIKAQEMDHHPEWFNVYNKVEITLSTHDAGGLTERDIKLATFIDSITA.

The protein belongs to the pterin-4-alpha-carbinolamine dehydratase family.

The enzyme catalyses (4aS,6R)-4a-hydroxy-L-erythro-5,6,7,8-tetrahydrobiopterin = (6R)-L-erythro-6,7-dihydrobiopterin + H2O. This Paraburkholderia phytofirmans (strain DSM 17436 / LMG 22146 / PsJN) (Burkholderia phytofirmans) protein is Putative pterin-4-alpha-carbinolamine dehydratase.